Here is a 358-residue protein sequence, read N- to C-terminus: DnaJ homolog subfamily B member 11 (358 aa).

A signal peptide spans 1-22 (MAPQNLSTFCLLLLYLIGTVIA). Residues 25-90 (DFYKILGVPR…EKRKQYDTYG (66 aa)) form the J domain. At T188 the chain carries Phosphothreonine. N261 carries an N-linked (GlcNAc...) asparagine glycan.

As to quaternary structure, part of a large chaperone multiprotein complex comprising DNAJB11, HSP90B1, HSPA5, HYOU, PDIA2, PDIA4, PDIA6, PPIB, SDF2L1, UGGT1 and very small amounts of ERP29, but not, or at very low levels, CALR nor CANX. Binds to denatured substrates in an ATP-independent manner. Interacts via the J domain with HSPA5 in an ATP-dependent manner. In terms of processing, contains high-mannose Endo H-sensitive carbohydrates. Post-translationally, cys-169, Cys-171, Cys-193 and Cys-196 form intramolecular disulfide bonds. The preferential partner for each Cys is not known.

It localises to the endoplasmic reticulum lumen. Functionally, as a co-chaperone for HSPA5 it is required for proper folding, trafficking or degradation of proteins. Binds directly to both unfolded proteins that are substrates for ERAD and nascent unfolded peptide chains, but dissociates from the HSPA5-unfolded protein complex before folding is completed. May help recruiting HSPA5 and other chaperones to the substrate. Stimulates HSPA5 ATPase activity. It is necessary for maturation and correct trafficking of PKD1. The polypeptide is DnaJ homolog subfamily B member 11 (Dnajb11) (Mus musculus (Mouse)).